The primary structure comprises 527 residues: tRNA (uracil(54)-C(5))-methyltransferase (527 aa).

One can recognise a TRAM domain in the interval 107–167 (PFERFQEIEV…DTYALADFLE (61 aa)). Cysteine 182, cysteine 188, cysteine 191, and cysteine 276 together coordinate [4Fe-4S] cluster. Residues glutamine 347, tyrosine 383, glutamate 404, and aspartate 451 each contribute to the S-adenosyl-L-methionine site. Cysteine 478 functions as the Nucleophile in the catalytic mechanism. Glutamate 517 (proton acceptor) is an active-site residue.

It belongs to the class I-like SAM-binding methyltransferase superfamily. RNA M5U methyltransferase family.

The enzyme catalyses uridine(54) in tRNA + S-adenosyl-L-methionine = 5-methyluridine(54) in tRNA + S-adenosyl-L-homocysteine + H(+). Its function is as follows. Catalyzes the formation of 5-methyl-uridine at position 54 (m5U54) in all tRNA. May also have a role in tRNA stabilization or maturation. The protein is tRNA (uracil(54)-C(5))-methyltransferase of Schizosaccharomyces pombe (strain 972 / ATCC 24843) (Fission yeast).